The primary structure comprises 89 residues: Neurotoxin LmNaTx28 (89 aa).

The signal sequence occupies residues 1–18 (MNLPTVLCIIALILGVRS). The region spanning 20–85 (KNGFFTKLGK…VADSSEKACQ (66 aa)) is the LCN-type CS-alpha/beta domain. Intrachain disulfides connect Cys-33/Cys-57, Cys-43/Cys-62, Cys-47/Cys-64, and Cys-58/Cys-84.

Belongs to the long (4 C-C) scorpion toxin superfamily. Sodium channel inhibitor family. Beta subfamily. As to expression, expressed by the venom gland.

Its subcellular location is the secreted. Its function is as follows. Binds voltage-independently at site-4 of sodium channels (Nav) and shift the voltage of activation toward more negative potentials thereby affecting sodium channel activation and promoting spontaneous and repetitive firing. The protein is Neurotoxin LmNaTx28 of Lychas mucronatus (Chinese swimming scorpion).